The chain runs to 207 residues: Ribosome maturation factor RimM (207 aa).

In terms of domain architecture, PRC barrel spans 114–207; sequence DDEYYWVDLI…RIDSDWPLDY (94 aa).

The protein belongs to the RimM family. In terms of assembly, binds ribosomal protein uS19.

The protein resides in the cytoplasm. Its function is as follows. An accessory protein needed during the final step in the assembly of 30S ribosomal subunit, possibly for assembly of the head region. Essential for efficient processing of 16S rRNA. May be needed both before and after RbfA during the maturation of 16S rRNA. It has affinity for free ribosomal 30S subunits but not for 70S ribosomes. This Bordetella pertussis (strain Tohama I / ATCC BAA-589 / NCTC 13251) protein is Ribosome maturation factor RimM.